The sequence spans 113 residues: Large ribosomal subunit protein uL22 (113 aa).

The protein belongs to the universal ribosomal protein uL22 family. As to quaternary structure, part of the 50S ribosomal subunit.

Its function is as follows. This protein binds specifically to 23S rRNA; its binding is stimulated by other ribosomal proteins, e.g. L4, L17, and L20. It is important during the early stages of 50S assembly. It makes multiple contacts with different domains of the 23S rRNA in the assembled 50S subunit and ribosome. Functionally, the globular domain of the protein is located near the polypeptide exit tunnel on the outside of the subunit, while an extended beta-hairpin is found that lines the wall of the exit tunnel in the center of the 70S ribosome. In Opitutus terrae (strain DSM 11246 / JCM 15787 / PB90-1), this protein is Large ribosomal subunit protein uL22.